Reading from the N-terminus, the 149-residue chain is Cell division protein SepF (149 aa).

The tract at residues 12–57 is disordered; that stretch reads SNEEDDYYEEDGYEQSQQQEQQTTQQTSSQPRFVRQTTQSQTPAGL. Residues 13 to 24 are compositionally biased toward acidic residues; sequence NEEDDYYEEDGY. Over residues 25 to 41 the composition is skewed to low complexity; that stretch reads EQSQQQEQQTTQQTSSQ. Residues 46 to 57 are compositionally biased toward polar residues; it reads RQTTQSQTPAGL.

This sequence belongs to the SepF family. As to quaternary structure, homodimer. Interacts with FtsZ.

It is found in the cytoplasm. Cell division protein that is part of the divisome complex and is recruited early to the Z-ring. Probably stimulates Z-ring formation, perhaps through the cross-linking of FtsZ protofilaments. Its function overlaps with FtsA. This Leuconostoc mesenteroides subsp. mesenteroides (strain ATCC 8293 / DSM 20343 / BCRC 11652 / CCM 1803 / JCM 6124 / NCDO 523 / NBRC 100496 / NCIMB 8023 / NCTC 12954 / NRRL B-1118 / 37Y) protein is Cell division protein SepF.